A 1737-amino-acid polypeptide reads, in one-letter code: Intraflagellar transport protein osm-1 (1737 aa).

WD repeat units lie at residues 14–53 (DGEA…KDRF), 63–103 (GKKS…NEKK), 110–150 (VQPS…SLYK), 151–189 (TDET…QSKI), 191–229 (TLQV…QQFD), 233–273 (QSEK…WDEG), and 511–553 (DQRS…EQVT). TPR repeat units lie at residues 700–737 (NDTE…KTSY), 803–836 (SQLY…GKAI), 848–881 (VTLE…KKAV), 907–940 (TGYY…NDAI), 979–1012 (HGRF…DDVL), 1037–1070 (RGDL…SDAY), and 1137–1170 (GTVH…ELAV).

The protein belongs to the IFT172 family. In terms of assembly, component of the IFT complex B composed of at least che-2, che-13, dyf-1, dyf-3, dyf-6, dyf-11, dyf-13, ift-20, ift-74, ift-81, ifta-2, osm-1, osm-5 and osm-6. In terms of tissue distribution, expressed in amphid and phasmid chemosensory neurons, where it appears to concentrate at the base of the transition zones, which correspond to the basal bodies of motile and sensory cilia. Moves in the retrograde direction along cilia and dendrites, suggesting that it is retrieved from the distal endings of the cilia by a retrograde transport pathway that moves it along cilia and then dendrites, back to the neuronal cell body.

The protein resides in the cell projection. Its subcellular location is the cilium. In terms of biological role, component of the intraflagellar transport (IFT) complex B required for transport of proteins in the motile cilium. May be required for ciliary entrance and transport of specific ciliary cargo proteins such as che-3 which are related to motility. Required for the maintenance and formation of chemosensory cilia that detect chemosensory cues. In Caenorhabditis elegans, this protein is Intraflagellar transport protein osm-1.